Here is a 25-residue protein sequence, read N- to C-terminus: Superoxide dismutase [Mn], mitochondrial (25 aa).

Residue histidine 9 coordinates Mn(2+).

The protein belongs to the iron/manganese superoxide dismutase family. Homotetramer. Requires Mn(2+) as cofactor.

Its subcellular location is the mitochondrion matrix. It catalyses the reaction 2 superoxide + 2 H(+) = H2O2 + O2. Destroys superoxide anion radicals which are normally produced within the cells and which are toxic to biological systems. The protein is Superoxide dismutase [Mn], mitochondrial of Alternaria alternata (Alternaria rot fungus).